Here is a 446-residue protein sequence, read N- to C-terminus: NADH-quinone oxidoreductase subunit D (446 aa).

It belongs to the complex I 49 kDa subunit family. As to quaternary structure, NDH-1 is composed of 14 different subunits. Subunits NuoB, C, D, E, F, and G constitute the peripheral sector of the complex.

The protein resides in the cell membrane. The enzyme catalyses a quinone + NADH + 5 H(+)(in) = a quinol + NAD(+) + 4 H(+)(out). Its function is as follows. NDH-1 shuttles electrons from NADH, via FMN and iron-sulfur (Fe-S) centers, to quinones in the respiratory chain. The immediate electron acceptor for the enzyme in this species is believed to be a menaquinone. Couples the redox reaction to proton translocation (for every two electrons transferred, four hydrogen ions are translocated across the cytoplasmic membrane), and thus conserves the redox energy in a proton gradient. In Nocardioides sp. (strain ATCC BAA-499 / JS614), this protein is NADH-quinone oxidoreductase subunit D.